The primary structure comprises 335 residues: Methionine import ATP-binding protein MetN 1 (335 aa).

The ABC transporter domain maps to 2–242 (IEFQQVHKTY…PQHPTTKRFV (241 aa)). 38–45 (GHSGAGKS) provides a ligand contact to ATP.

Belongs to the ABC transporter superfamily. Methionine importer (TC 3.A.1.24) family. In terms of assembly, the complex is composed of two ATP-binding proteins (MetN), two transmembrane proteins (MetI) and a solute-binding protein (MetQ).

It localises to the cell inner membrane. It carries out the reaction L-methionine(out) + ATP + H2O = L-methionine(in) + ADP + phosphate + H(+). The enzyme catalyses D-methionine(out) + ATP + H2O = D-methionine(in) + ADP + phosphate + H(+). Its function is as follows. Part of the ABC transporter complex MetNIQ involved in methionine import. Responsible for energy coupling to the transport system. The protein is Methionine import ATP-binding protein MetN 1 of Pseudomonas putida (strain ATCC 47054 / DSM 6125 / CFBP 8728 / NCIMB 11950 / KT2440).